Here is a 758-residue protein sequence, read N- to C-terminus: Calcium up-regulated protein E (758 aa).

The interval 1 to 22 is disordered; that stretch reads MINIEDISKSSNQSEEKQLKST. Ricin B-type lectin domains lie at 25–145 and 156–288; these read KPKY…WTTF and GYFQ…WIAN.

The protein belongs to the cup family.

Its subcellular location is the cytoplasm. It localises to the membrane. May play an important role in stabilizing and/or regulating the cell membrane during Ca(2+) stress or certain stages of development. In Dictyostelium discoideum (Social amoeba), this protein is Calcium up-regulated protein E (cupE).